The chain runs to 151 residues: Major curlin subunit (151 aa).

The N-terminal stretch at 1 to 20 is a signal peptide; that stretch reads MKLLKVAAIAAIVFSGSALA. A disordered region spans residues 71-90; that stretch reads TQHGGGNGADVGQGSDDSSI.

Belongs to the CsgA/CsgB family.

The protein resides in the fimbrium. Curlin is the structural subunit of the curli fimbriae. Curli are coiled surface structures that assemble preferentially at growth temperatures below 37 degrees Celsius. Curli can bind to fibronectin. The protein is Major curlin subunit (csgA) of Escherichia coli (strain K12).